We begin with the raw amino-acid sequence, 522 residues long: Maturase K (522 aa).

The protein belongs to the intron maturase 2 family. MatK subfamily.

It is found in the plastid. The protein localises to the chloroplast. In terms of biological role, usually encoded in the trnK tRNA gene intron. Probably assists in splicing its own and other chloroplast group II introns. The polypeptide is Maturase K (Iris orientalis (Yellowband iris)).